The chain runs to 358 residues: MRVDDDRFPWDQDSILSRDLLSASSLQLCYENLNRSCVRSPYSPGPRLILYAVFGFGAVLAVCGNLMVMTSILHFRQLHSPANFLVASLACADFLVGLTVMPFSMVRSVEGCWYFGDTYCKLHTCFDVSFCYCSLFHLCFISVDRYIAVSDPLIYPTRFTASVSGKCITFSWLLSIIYGFPLIYTGASEAGLEDLVSALTCVGGCQIPMNQKFVLINFLLFLVPTLVMMTVYSKIFLIARQQAQNIEKMRKQTARASESYKDRVCKRERKAAKTLGIAVAAFLLSWLPYFIDSIIDAFLGFITPTYVYEILIWIVYYNSSMNPLIYAFFYPWFRKATKLIVTGKILRENSSTINLFPE.

At 1–47 the chain is on the extracellular side; that stretch reads MRVDDDRFPWDQDSILSRDLLSASSLQLCYENLNRSCVRSPYSPGPR. The N-linked (GlcNAc...) asparagine glycan is linked to N34. Intrachain disulfides connect C37/C201 and C120/C205. The chain crosses the membrane as a helical span at residues 48-68; it reads LILYAVFGFGAVLAVCGNLMV. Residues 69–83 are Cytoplasmic-facing; the sequence is MTSILHFRQLHSPAN. The helical transmembrane segment at 84–104 threads the bilayer; sequence FLVASLACADFLVGLTVMPFS. Topologically, residues 105-122 are extracellular; it reads MVRSVEGCWYFGDTYCKL. The chain crosses the membrane as a helical span at residues 123–143; that stretch reads HTCFDVSFCYCSLFHLCFISV. Topologically, residues 144 to 166 are cytoplasmic; the sequence is DRYIAVSDPLIYPTRFTASVSGK. Residues 167 to 187 traverse the membrane as a helical segment; that stretch reads CITFSWLLSIIYGFPLIYTGA. At 188-212 the chain is on the extracellular side; the sequence is SEAGLEDLVSALTCVGGCQIPMNQK. Residues 213 to 233 traverse the membrane as a helical segment; the sequence is FVLINFLLFLVPTLVMMTVYS. Over 234–274 the chain is Cytoplasmic; that stretch reads KIFLIARQQAQNIEKMRKQTARASESYKDRVCKRERKAAKT. Residues 275–295 traverse the membrane as a helical segment; the sequence is LGIAVAAFLLSWLPYFIDSII. Residues 296 to 309 are Extracellular-facing; sequence DAFLGFITPTYVYE. The chain crosses the membrane as a helical span at residues 310–333; it reads ILIWIVYYNSSMNPLIYAFFYPWF. Residues 334-358 lie on the Cytoplasmic side of the membrane; it reads RKATKLIVTGKILRENSSTINLFPE.

This sequence belongs to the G-protein coupled receptor 1 family.

The protein resides in the cell membrane. Functionally, olfactory receptor specific for N,N-dimethylalkylamines trace amines, such as N,N-dimethylcyclohexylamine. Trace amine compounds are enriched in animal body fluids and act on trace amine-associated receptors (TAARs) to elicit both intraspecific and interspecific innate behaviors. Ligand-binding causes a conformation change that triggers signaling via G(s)-class of G alpha proteins (GNAL or GNAS). The protein is Trace amine-associated receptor 7d of Rattus norvegicus (Rat).